Reading from the N-terminus, the 361-residue chain is Putative agmatine deiminase (361 aa).

Cysteine 354 serves as the catalytic Amidino-cysteine intermediate.

The protein belongs to the agmatine deiminase family.

It catalyses the reaction agmatine + H2O = N-carbamoylputrescine + NH4(+). The protein is Putative agmatine deiminase of Streptococcus pneumoniae (strain Hungary19A-6).